The sequence spans 338 residues: RNA 3'-terminal phosphate cyclase (338 aa).

ATP contacts are provided by residues Q103 and 283 to 287 (YLADQ). H308 acts as the Tele-AMP-histidine intermediate in catalysis.

This sequence belongs to the RNA 3'-terminal cyclase family. Type 1 subfamily.

Its subcellular location is the cytoplasm. The catalysed reaction is a 3'-end 3'-phospho-ribonucleotide-RNA + ATP = a 3'-end 2',3'-cyclophospho-ribonucleotide-RNA + AMP + diphosphate. Catalyzes the conversion of 3'-phosphate to a 2',3'-cyclic phosphodiester at the end of RNA. The mechanism of action of the enzyme occurs in 3 steps: (A) adenylation of the enzyme by ATP; (B) transfer of adenylate to an RNA-N3'P to produce RNA-N3'PP5'A; (C) and attack of the adjacent 2'-hydroxyl on the 3'-phosphorus in the diester linkage to produce the cyclic end product. The biological role of this enzyme is unknown but it is likely to function in some aspects of cellular RNA processing. This chain is RNA 3'-terminal phosphate cyclase, found in Escherichia coli O7:K1 (strain IAI39 / ExPEC).